Here is a 163-residue protein sequence, read N- to C-terminus: Endoribonuclease YbeY (163 aa).

Zn(2+)-binding residues include His116, His120, and His126.

It belongs to the endoribonuclease YbeY family. Requires Zn(2+) as cofactor.

The protein localises to the cytoplasm. In terms of biological role, single strand-specific metallo-endoribonuclease involved in late-stage 70S ribosome quality control and in maturation of the 3' terminus of the 16S rRNA. The sequence is that of Endoribonuclease YbeY from Idiomarina loihiensis (strain ATCC BAA-735 / DSM 15497 / L2-TR).